A 234-amino-acid chain; its full sequence is NLP effector protein 1 (234 aa).

The N-terminal stretch at 1–18 (MQLRAFISVFASLACVNA) is a signal peptide. Asparagine 66 is a glycosylation site (N-linked (GlcNAc...) asparagine). The Conserved undecapeptide motif I motif lies at 102-112 (AFMYSWYMPKD). The short motif at 119-125 (GHRHDWE) is the Hepta-peptide GHRHDWE motif II element.

It belongs to the Necrosis inducing protein (NPP1) family.

The protein localises to the secreted. In terms of biological role, secreted effector that contributes to virulence during infection by P.capsici. Induces distinct chlorosis at 3 days after inoculation of host C.annuum leaves, and all the chlorotic areas gradually turn brown and become moderately necrotic at 7 days after inoculation. Leads only to chlorotic areas, without necrosis at 7 days after non-host N.benthamiana leaves infection. Induces cell death in hot pepper. The protein is NLP effector protein 1 of Phytophthora capsici.